The following is a 629-amino-acid chain: Kelch-like protein 13 (629 aa).

The 70-residue stretch at 66-135 (CDVTLVPGDG…IYTAKLSLNM (70 aa)) folds into the BTB domain. Residues 170-271 (CVEVGRIANT…TPQDLINYVQ (102 aa)) form the BACK domain. Kelch repeat units lie at residues 315 to 363 (HLVT…VIGN), 364 to 415 (FLYV…ALKG), 416 to 462 (HLYA…VYGG), 464 to 509 (MYIS…TVGD), 511 to 561 (LYVI…VFEN), and 562 to 610 (KIYV…TLTV).

In terms of assembly, component of the BCR(KLHL9-KLHL13) E3 ubiquitin ligase complex, at least composed of CUL3, KLHL9, KLHL13 and RBX1. Interacts with AURKB.

It functions in the pathway protein modification; protein ubiquitination. In terms of biological role, substrate-specific adapter of a BCR (BTB-CUL3-RBX1) E3 ubiquitin-protein ligase complex required for mitotic progression and cytokinesis. The BCR(KLHL9-KLHL13) E3 ubiquitin ligase complex mediates the ubiquitination of AURKB and controls the dynamic behavior of AURKB on mitotic chromosomes and thereby coordinates faithful mitotic progression and completion of cytokinesis. In Gallus gallus (Chicken), this protein is Kelch-like protein 13 (KLHL13).